Here is a 243-residue protein sequence, read N- to C-terminus: Adenosine 5'-phosphosulfate reductase (243 aa).

Positions 126, 127, 209, and 212 each coordinate [4Fe-4S] cluster. Catalysis depends on cysteine 235, which acts as the Nucleophile; cysteine thiosulfonate intermediate.

Belongs to the PAPS reductase family. CysH subfamily. The cofactor is [4Fe-4S] cluster.

It localises to the cytoplasm. The catalysed reaction is [thioredoxin]-disulfide + sulfite + AMP + 2 H(+) = adenosine 5'-phosphosulfate + [thioredoxin]-dithiol. It functions in the pathway sulfur metabolism; hydrogen sulfide biosynthesis; sulfite from sulfate. Its function is as follows. Catalyzes the formation of sulfite from adenosine 5'-phosphosulfate (APS) using thioredoxin as an electron donor. This Staphylococcus epidermidis (strain ATCC 12228 / FDA PCI 1200) protein is Adenosine 5'-phosphosulfate reductase.